A 360-amino-acid chain; its full sequence is Photosystem II protein D1 1 (360 aa).

Helical transmembrane passes span 29-46 (YVGW…AATV), 118-133 (HFLI…QWEL), and 142-156 (WICV…SATA). A chlorophyll a-binding site is contributed by His-118. Tyr-126 serves as a coordination point for pheophytin a. [CaMn4O5] cluster is bound by residues Asp-170 and Glu-189. The helical transmembrane segment at 197–218 (FHMLGVAGVFGGSLFSAMHGSL) threads the bilayer. Position 198 (His-198) interacts with chlorophyll a. Residues His-215 and 264 to 265 (SF) contribute to the a quinone site. His-215 lines the Fe cation pocket. His-272 lines the Fe cation pocket. The helical transmembrane segment at 274-288 (FLAAWPVIGIWFTAL) threads the bilayer. [CaMn4O5] cluster-binding residues include His-332, Glu-333, Asp-342, and Ala-344. Residues 345–360 (AGEVAPVALTAPAING) constitute a propeptide that is removed on maturation.

Belongs to the reaction center PufL/M/PsbA/D family. In terms of assembly, PSII is composed of 1 copy each of membrane proteins PsbA, PsbB, PsbC, PsbD, PsbE, PsbF, PsbH, PsbI, PsbJ, PsbK, PsbL, PsbM, PsbT, PsbX, PsbY, PsbZ, Psb30/Ycf12, peripheral proteins PsbO, CyanoQ (PsbQ), PsbU, PsbV and a large number of cofactors. It forms dimeric complexes. The cofactor is The D1/D2 heterodimer binds P680, chlorophylls that are the primary electron donor of PSII, and subsequent electron acceptors. It shares a non-heme iron and each subunit binds pheophytin, quinone, additional chlorophylls, carotenoids and lipids. D1 provides most of the ligands for the Mn4-Ca-O5 cluster of the oxygen-evolving complex (OEC). There is also a Cl(-1) ion associated with D1 and D2, which is required for oxygen evolution. The PSII complex binds additional chlorophylls, carotenoids and specific lipids.. Tyr-161 forms a radical intermediate that is referred to as redox-active TyrZ, YZ or Y-Z. In terms of processing, C-terminally processed by CtpA; processing is essential to allow assembly of the oxygen-evolving complex and thus photosynthetic growth.

Its subcellular location is the cellular thylakoid membrane. The catalysed reaction is 2 a plastoquinone + 4 hnu + 2 H2O = 2 a plastoquinol + O2. In terms of biological role, photosystem II (PSII) is a light-driven water:plastoquinone oxidoreductase that uses light energy to abstract electrons from H(2)O, generating O(2) and a proton gradient subsequently used for ATP formation. It consists of a core antenna complex that captures photons, and an electron transfer chain that converts photonic excitation into a charge separation. The D1/D2 (PsbA/PsbD) reaction center heterodimer binds P680, the primary electron donor of PSII as well as several subsequent electron acceptors. In Nostoc sp. (strain PCC 7120 / SAG 25.82 / UTEX 2576), this protein is Photosystem II protein D1 1.